The chain runs to 2172 residues: DExH-box ATP-dependent RNA helicase DExH13 (2172 aa).

A disordered region spans residues 20 to 83 (YKVNSSLVLN…KSKKKKERCD (64 aa)). Positions 30-73 (SDERRRDTHESSGEPESLRGRIDPKSFGDRVVRGRPHELDERLN) are enriched in basic and acidic residues. The Helicase ATP-binding 1 domain maps to 515–698 (GTALFKADNI…FLRVDLKNGL (184 aa)). Residue 528–535 (APTGAGKT) participates in ATP binding. The short motif at 640-643 (DEIH) is the DEIH box element. Residues 742–946 (GKHQVLIFVH…NAREACHWLG (205 aa)) enclose the Helicase C-terminal 1 domain. Residues 1007-1308 (TDLGRIASYY…KWLDSPTVLP (302 aa)) enclose the SEC63 1 domain. The Helicase ATP-binding 2 domain maps to 1361–1538 (TVLYNTSDNV…WIGASSCGVF (178 aa)). 1374–1381 (APTGSGKT) provides a ligand contact to ATP. The DELH box signature appears at 1480-1483 (DELH). In terms of domain architecture, Helicase C-terminal 2 spans 1575 to 1772 (AIVQHAKNKK…NFNAEVVARV (198 aa)). The SEC63 2 domain occupies 1840–2157 (PLNLGMIASY…YLGCDQEYSF (318 aa)).

It is found in the nucleus. The catalysed reaction is ATP + H2O = ADP + phosphate + H(+). In terms of biological role, RNA helicase that plays an essential role in pre-mRNA splicing as component of the U5 snRNP and U4/U6-U5 tri-snRNP complexes. Involved in spliceosome assembly, activation and disassembly. This is DExH-box ATP-dependent RNA helicase DExH13 from Arabidopsis thaliana (Mouse-ear cress).